We begin with the raw amino-acid sequence, 277 residues long: Large ribosomal subunit protein uL2 (277 aa).

Residues 222-277 (GVAMNPVDHPHGGGEGRTSGGRHPVSPWGKPTKGKRTRSNKATDKFIMRTRHQRKK) are disordered.

The protein belongs to the universal ribosomal protein uL2 family. As to quaternary structure, part of the 50S ribosomal subunit. Forms a bridge to the 30S subunit in the 70S ribosome.

Functionally, one of the primary rRNA binding proteins. Required for association of the 30S and 50S subunits to form the 70S ribosome, for tRNA binding and peptide bond formation. It has been suggested to have peptidyltransferase activity; this is somewhat controversial. Makes several contacts with the 16S rRNA in the 70S ribosome. This Bartonella henselae (strain ATCC 49882 / DSM 28221 / CCUG 30454 / Houston 1) (Rochalimaea henselae) protein is Large ribosomal subunit protein uL2.